A 296-amino-acid polypeptide reads, in one-letter code: GTPase Era (296 aa).

Positions 7-174 constitute an Era-type G domain; that stretch reads KCSMSAIVGA…VDYLCETSPY (168 aa). Positions 15 to 22 are G1; sequence GATNAGKS. A GTP-binding site is contributed by 15-22; sequence GATNAGKS. The segment at 41–45 is G2; the sequence is QTTRV. Residues 62 to 65 form a G3 region; the sequence is DTPG. GTP-binding positions include 62–66 and 124–127; these read DTPGI and NKID. Residues 124 to 127 are G4; the sequence is NKID. The tract at residues 153–155 is G5; it reads ISA. A KH type-2 domain is found at 205 to 282; the sequence is LRHELPYSLS…HLFLFVKVRE (78 aa).

Belongs to the TRAFAC class TrmE-Era-EngA-EngB-Septin-like GTPase superfamily. Era GTPase family. Monomer.

The protein resides in the cytoplasm. It is found in the cell inner membrane. An essential GTPase that binds both GDP and GTP, with rapid nucleotide exchange. Plays a role in 16S rRNA processing and 30S ribosomal subunit biogenesis and possibly also in cell cycle regulation and energy metabolism. This Ehrlichia ruminantium (strain Welgevonden) protein is GTPase Era.